The following is a 391-amino-acid chain: MVEADRPGKLFIGGLNTETNEKALEAVFGKYGRIVEVLLMKDRETNKSRGFAFVTFESPADAKDAARDMNGKSLDGKAIKVEQATKPSFESGRRGPPPPPRSRGPPRGLRGGRGGSGGTRGPPSRGGHMDDGGYSMNFNMSSSRGPLPVKRGPPPRSGGPPPKRSAPSGPVRSSSGMGGRAPVSRGRDSYGGPPRREPLPSRRDVYLSPRDDGYSTKDSYSSRDYPSSRDTRDYAPPPRDYTYRDYGHSSSRDDYPSRGYSDRDGYGRDRDYSDHPSGGSYRDSYESYGNSRSAPPTRGPPPSYGGSSRYDDYSSSRDGYGGSRDSYSSSRSDLYSSGRDRVGRQERGLPPSMERGYPPPRDSYSSSSRGAPRGGGRGGSRSDRGGGRSRY.

Met1 carries the post-translational modification N-acetylmethionine; in Heterogeneous nuclear ribonucleoprotein G; alternate. Val2 is subject to N-acetylvaline; in Heterogeneous nuclear ribonucleoprotein G, N-terminally processed. The 79-residue stretch at 8–86 folds into the RRM domain; that stretch reads GKLFIGGLNT…KAIKVEQATK (79 aa). A Glycyl lysine isopeptide (Lys-Gly) (interchain with G-Cter in SUMO2) cross-link involves residue Lys22. Lys30 bears the N6-acetyllysine mark. Residues 61–80 are compositionally biased toward basic and acidic residues; that stretch reads DAKDAARDMNGKSLDGKAIK. Residues 61 to 391 form a disordered region; the sequence is DAKDAARDMN…SDRGGGRSRY (331 aa). Residues Lys80 and Lys86 each participate in a glycyl lysine isopeptide (Lys-Gly) (interchain with G-Cter in SUMO2) cross-link. A phosphoserine mark is found at Ser88 and Ser91. The span at 109-120 shows a compositional bias: gly residues; sequence LRGGRGGSGGTR. Residues Arg125, Arg144, and Arg164 each carry the omega-N-methylarginine modification. Residues 151 to 164 are compositionally biased toward pro residues; that stretch reads RGPPPRSGGPPPKR. Ser165 carries the post-translational modification Phosphoserine. Arg172 is modified (omega-N-methylarginine). The residue at position 174 (Ser174) is a Phosphoserine. The tract at residues 186–236 is necessary for the association to nascent RNAPII transcripts and nuclear localization; it reads GRDSYGGPPRREPLPSRRDVYLSPRDDGYSTKDSYSSRDYPSSRDTRDYAP. Composition is skewed to basic and acidic residues over residues 194–215 and 241–274; these read PRREPLPSRRDVYLSPRDDGYS and YTYRDYGHSSSRDDYPSRGYSDRDGYGRDRDYSD. 5 positions are modified to phosphoserine: Ser261, Ser328, Ser329, Ser330, and Ser332. The segment covering 323-337 has biased composition (low complexity); the sequence is SRDSYSSSRSDLYSS. The segment at 333 to 391 is necessary for RNA-binding; the sequence is DLYSSGRDRVGRQERGLPPSMERGYPPPRDSYSSSSRGAPRGGGRGGSRSDRGGGRSRY. A compositionally biased stretch (basic and acidic residues) spans 338–347; the sequence is GRDRVGRQER. Ser352 is subject to Phosphoserine. The span at 362 to 371 shows a compositional bias: low complexity; that stretch reads DSYSSSSRGA. Over residues 380 to 391 the composition is skewed to basic and acidic residues; that stretch reads SRSDRGGGRSRY.

Homomultimer. Found in the supraspliceosome complex. Identified in the spliceosome C complex. Forms a complex with ILF2, ILF3, YLPM1, KHDRBS1, NCOA5 and PPP1CA. Interacts with CLK2, KHDRBS2, KHDRBS3, SAFB/SAFB1, TRA2B and YTHDC1. Interacts with ERAP1; the interaction is RNA-independent. Interacts with PPIA/CYPA. In terms of processing, O-glycosylated. Post-translationally, arg-185 is dimethylated, probably to asymmetric dimethylarginine.

Its subcellular location is the nucleus. Its function is as follows. RNA-binding protein that plays several role in the regulation of pre- and post-transcriptional processes. Implicated in tissue-specific regulation of gene transcription and alternative splicing of several pre-mRNAs. Binds to and stimulates transcription from the tumor suppressor TXNIP gene promoter; may thus be involved in tumor suppression. When associated with SAFB, binds to and stimulates transcription from the SREBF1 promoter. Associates with nascent mRNAs transcribed by RNA polymerase II. Component of the supraspliceosome complex that regulates pre-mRNA alternative splice site selection. Can either activate or suppress exon inclusion; acts additively with TRA2B to promote exon 7 inclusion of the survival motor neuron SMN2. Represses the splicing of MAPT/Tau exon 10. Binds preferentially to single-stranded 5'-CC[A/C]-rich RNA sequence motifs localized in a single-stranded conformation; probably binds RNA as a homodimer. Binds non-specifically to pre-mRNAs. Also plays a role in the cytoplasmic TNFR1 trafficking pathways; promotes both the IL-1-beta-mediated inducible proteolytic cleavage of TNFR1 ectodomains and the release of TNFR1 exosome-like vesicles to the extracellular compartment. This Pan troglodytes (Chimpanzee) protein is RNA-binding motif protein, X chromosome (RBMX).